Here is a 368-residue protein sequence, read N- to C-terminus: Phosphate acyltransferase (368 aa).

The protein belongs to the PlsX family. As to quaternary structure, homodimer. Probably interacts with PlsY.

The protein localises to the cytoplasm. The catalysed reaction is a fatty acyl-[ACP] + phosphate = an acyl phosphate + holo-[ACP]. The protein operates within lipid metabolism; phospholipid metabolism. Functionally, catalyzes the reversible formation of acyl-phosphate (acyl-PO(4)) from acyl-[acyl-carrier-protein] (acyl-ACP). This enzyme utilizes acyl-ACP as fatty acyl donor, but not acyl-CoA. This chain is Phosphate acyltransferase, found in Cereibacter sphaeroides (strain ATCC 17025 / ATH 2.4.3) (Rhodobacter sphaeroides).